The sequence spans 834 residues: MAHETSFNDALDYIYIANSMNDRAFLIAEPHPEQPNVDGQDQDDAELEELDDMAVTDDGQLEDTNNNNNSKRYYSSGKRRADFIGSLALKPPPTDVNTTTTTAGSPLATAALAAAAASASVAAAAARITAKAAHRALTTKQDATSSPASSPALQLIDMDNNYTNVAVGLGAMLLNDTLLLEGNDSSLFGEMLANRSGQLDLINGTGGLNVTTSKVAEDDFTQLLRMAVTSVLLGLMILVTIIGNVFVIAAIILERNLQNVANYLVASLAVADLFVACLVMPLGAVYEISQGWILGPELCDIWTSCDVLCCTASILHLVAIAVDRYWAVTNIDYIHSRTSNRVFMMIFCVWTAAVIVSLAPQFGWKDPDYLQRIEQQKCMVSQDVSYQVFATCCTFYVPLLVILALYWKIYQTARKRIHRRRPRPVDAAVNNNQPDGGAATDTKLHRLRLRLGRFSTAKSKTGSAVGVSGPASGGRALGLVDGNSTNTVNTVEDTEFSSSNVDSKSRAGVEAPSTSGNQIATVSHLVALAKQQGKSTAKSSAAVNGMAPSGRQEDDGQRPEHGEQEDREELEDQDEQVGPQPTTATSATTAAGTNESEDQCKANGVEVLEDPQLQQQLEQVQQLQKSVKSGGGGGASTSNATTITSISALSPQTPTSQGVGIAAAAAGPMTAKTSTLTSCNQSHPLCGTANESPSTPEPRSRQPTTPQQQPHQQAHQQQQQQQQLSSIANPMQKVNKRKETLEAKRERKAAKTLAIITGAFVVCWLPFFVMALTMPLCAACQISDSVASLFLWLGYFNSTLNPVIYTIFSPEFRQAFKRILFGGHRPVHYRSGKL.

Residues 1 to 230 (MAHETSFNDA…TQLLRMAVTS (230 aa)) lie on the Extracellular side of the membrane. The interval 56–75 (TDDGQLEDTNNNNNSKRYYS) is disordered. Asn-68, Asn-97, Asn-161, Asn-175, Asn-183, Asn-194, Asn-203, and Asn-209 each carry an N-linked (GlcNAc...) asparagine glycan. The helical transmembrane segment at 231-253 (VLLGLMILVTIIGNVFVIAAIIL) threads the bilayer. Topologically, residues 254–263 (ERNLQNVANY) are cytoplasmic. Residues 264-285 (LVASLAVADLFVACLVMPLGAV) traverse the membrane as a helical segment. Residues 286–300 (YEISQGWILGPELCD) lie on the Extracellular side of the membrane. Cys-299 and Cys-378 form a disulfide bridge. A helical membrane pass occupies residues 301–322 (IWTSCDVLCCTASILHLVAIAV). Over 323-341 (DRYWAVTNIDYIHSRTSNR) the chain is Cytoplasmic. A helical membrane pass occupies residues 342 to 364 (VFMMIFCVWTAAVIVSLAPQFGW). Residues 365-391 (KDPDYLQRIEQQKCMVSQDVSYQVFAT) are Extracellular-facing. Residues 392-413 (CCTFYVPLLVILALYWKIYQTA) traverse the membrane as a helical segment. Residues 414–752 (RKRIHRRRPR…AKRERKAAKT (339 aa)) are Cytoplasmic-facing. Disordered regions lie at residues 420-442 (RRPR…ATDT), 460-516 (KTGS…STSG), 531-599 (QQGK…SEDQ), 617-640 (LEQV…TSNA), and 674-743 (STLT…TLEA). Polar residues-rich tracts occupy residues 482–502 (GNST…SNVD) and 532–542 (QGKSTAKSSAA). The segment covering 551–564 (RQEDDGQRPEHGEQ) has biased composition (basic and acidic residues). Acidic residues predominate over residues 565–575 (EDREELEDQDE). Residues 582 to 593 (TTATSATTAAGT) are compositionally biased toward low complexity. A compositionally biased stretch (polar residues) spans 674–694 (STLTSCNQSHPLCGTANESPS). The segment covering 702-723 (QPTTPQQQPHQQAHQQQQQQQQ) has biased composition (low complexity). Residues 753–776 (LAIITGAFVVCWLPFFVMALTMPL) form a helical membrane-spanning segment. Topologically, residues 777–785 (CAACQISDS) are extracellular. The helical transmembrane segment at 786–808 (VASLFLWLGYFNSTLNPVIYTIF) threads the bilayer. At 809–834 (SPEFRQAFKRILFGGHRPVHYRSGKL) the chain is on the cytoplasmic side.

It belongs to the G-protein coupled receptor 1 family.

It localises to the cell membrane. Its function is as follows. This is one of the several different receptors for 5-hydroxytryptamine (serotonin), a biogenic hormone that functions as a neurotransmitter, a hormone, and a mitogen. The activity of this receptor is mediated by G proteins which inhibit adenylate cyclase. This chain is 5-hydroxytryptamine receptor 2A (5-HT1A), found in Drosophila melanogaster (Fruit fly).